Reading from the N-terminus, the 228-residue chain is ATP synthase subunit a (228 aa).

6 consecutive transmembrane segments (helical) span residues 14 to 34, 71 to 91, 101 to 121, 139 to 159, 165 to 185, and 188 to 208; these read YFLL…WLFF, WVPI…LGLL, ISLT…LGFY, FLLP…PIAL, ANLT…WVLM, and VAIA…EIGV.

Belongs to the ATPase A chain family. As to quaternary structure, F-type ATPases have 2 components, CF(1) - the catalytic core - and CF(0) - the membrane proton channel. CF(1) has five subunits: alpha(3), beta(3), gamma(1), delta(1), epsilon(1). CF(0) has three main subunits: a, b and c.

Its subcellular location is the mitochondrion inner membrane. Mitochondrial membrane ATP synthase (F(1)F(0) ATP synthase or Complex V) produces ATP from ADP in the presence of a proton gradient across the membrane which is generated by electron transport complexes of the respiratory chain. F-type ATPases consist of two structural domains, F(1) - containing the extramembraneous catalytic core and F(0) - containing the membrane proton channel, linked together by a central stalk and a peripheral stalk. During catalysis, ATP synthesis in the catalytic domain of F(1) is coupled via a rotary mechanism of the central stalk subunits to proton translocation. Key component of the proton channel; it may play a direct role in the translocation of protons across the membrane. This Pisaster ochraceus (Ochre sea star) protein is ATP synthase subunit a (ATP6).